We begin with the raw amino-acid sequence, 458 residues long: Glutamyl-tRNA reductase (458 aa).

Substrate-binding positions include 49–52 (TCNR), S109, 114–116 (EQQ), and Q120. C50 (nucleophile) is an active-site residue. An NADP(+)-binding site is contributed by 191–196 (GAGAMA).

Belongs to the glutamyl-tRNA reductase family. Homodimer.

It carries out the reaction (S)-4-amino-5-oxopentanoate + tRNA(Glu) + NADP(+) = L-glutamyl-tRNA(Glu) + NADPH + H(+). It participates in porphyrin-containing compound metabolism; protoporphyrin-IX biosynthesis; 5-aminolevulinate from L-glutamyl-tRNA(Glu): step 1/2. Catalyzes the NADPH-dependent reduction of glutamyl-tRNA(Glu) to glutamate 1-semialdehyde (GSA). The polypeptide is Glutamyl-tRNA reductase (Corynebacterium aurimucosum (strain ATCC 700975 / DSM 44827 / CIP 107346 / CN-1) (Corynebacterium nigricans)).